A 173-amino-acid polypeptide reads, in one-letter code: Mesencephalic astrocyte-derived neurotrophic factor homolog (173 aa).

Positions 1–22 (MKTWYMVVVIGFLATLVQTSLA) are cleaved as a signal peptide. 4 cysteine pairs are disulfide-bonded: C28/C114, C31/C103, C61/C72, and C148/C151.

It belongs to the ARMET family.

Its subcellular location is the secreted. Functionally, required during the maturation of the embryonic nervous system for maintenance of neuronal and cuticular connectivity. Essential for maintenance of dopaminergic neurons and dopamine levels. The polypeptide is Mesencephalic astrocyte-derived neurotrophic factor homolog (Drosophila yakuba (Fruit fly)).